The primary structure comprises 255 residues: Isoprenyl transferase (255 aa).

The active site involves Asp35. A Mg(2+)-binding site is contributed by Asp35. Residues 36–39 (GNGR), Trp40, Arg48, His52, and 80–82 (STE) contribute to the substrate site. The active-site Proton acceptor is Asn83. Residues Trp84, Arg86, Arg203, and 209–211 (RIS) contribute to the substrate site. Glu222 contacts Mg(2+).

It belongs to the UPP synthase family. As to quaternary structure, homodimer. Requires Mg(2+) as cofactor.

Its function is as follows. Catalyzes the condensation of isopentenyl diphosphate (IPP) with allylic pyrophosphates generating different type of terpenoids. In Clostridium tetani (strain Massachusetts / E88), this protein is Isoprenyl transferase.